Consider the following 212-residue polypeptide: Ribonuclease HII (212 aa).

Positions 20–209 constitute an RNase H type-2 domain; the sequence is TCVVGVDEVG…VHNILYQEAS (190 aa). A divalent metal cation-binding residues include Asp26, Glu27, and Asp117.

Belongs to the RNase HII family. The cofactor is Mn(2+). It depends on Mg(2+) as a cofactor.

Its subcellular location is the cytoplasm. The catalysed reaction is Endonucleolytic cleavage to 5'-phosphomonoester.. Its function is as follows. Endonuclease that specifically degrades the RNA of RNA-DNA hybrids. The protein is Ribonuclease HII of Cereibacter sphaeroides (strain ATCC 17029 / ATH 2.4.9) (Rhodobacter sphaeroides).